A 216-amino-acid chain; its full sequence is Urease accessory protein UreG (216 aa).

25 to 32 (GPVGSGKT) serves as a coordination point for GTP.

Belongs to the SIMIBI class G3E GTPase family. UreG subfamily. As to quaternary structure, homodimer. UreD, UreF and UreG form a complex that acts as a GTP-hydrolysis-dependent molecular chaperone, activating the urease apoprotein by helping to assemble the nickel containing metallocenter of UreC. The UreE protein probably delivers the nickel.

The protein resides in the cytoplasm. Its function is as follows. Facilitates the functional incorporation of the urease nickel metallocenter. This process requires GTP hydrolysis, probably effectuated by UreG. The chain is Urease accessory protein UreG from Burkholderia pseudomallei (strain 1710b).